A 354-amino-acid chain; its full sequence is Fusarinine C esterase sidJ (354 aa).

It belongs to the sidJ hydrolase family. Homodimer.

It carries out the reaction fusarinine C + 3 H2O = 3 fusarinine + Fe(3+). Its function is as follows. Displays specific fusarinine C (FsC) esterase activity but does not hydrolyze triacetylfusarinine C (TAFC), which has the same core structure as fusarinine C. Both extra- and intracellular siderophores have been shown to be crucial for the virulence. Subsequent to chelation of iron and uptake, FsC and TAFC are hydrolyzed and the iron is transferred to the metabolism or to the intracellular siderophore ferricrocin (FC) for transport and storage of iron. This is Fusarinine C esterase sidJ from Aspergillus fumigatus (strain ATCC MYA-4609 / CBS 101355 / FGSC A1100 / Af293) (Neosartorya fumigata).